The sequence spans 205 residues: Hydrogenase-4 component A (205 aa).

4Fe-4S ferredoxin-type domains lie at 2–31 (NRFVVAEPLWCTGCNTCLAACSDVHKTQGL), 41–72 (KTSTITAPVVCHHCEEAPCLQVCPVNAISQRD), 73–102 (DAIQLNESLCIGCKLCAVVCPFGAISASGS), and 140–172 (QTVAVKCDLCDFLPEGPACVRACPNQALRLITG). [4Fe-4S] cluster-binding residues include Cys-12, Cys-15, Cys-18, Cys-22, Cys-51, Cys-54, Cys-59, Cys-63, Cys-82, Cys-85, Cys-88, Cys-92, Cys-146, Cys-149, Cys-158, and Cys-162.

The cofactor is [4Fe-4S] cluster.

In terms of biological role, probable electron transfer protein for hydrogenase 4. The polypeptide is Hydrogenase-4 component A (Escherichia coli (strain K12)).